The chain runs to 153 residues: UPF0756 membrane protein BCB4264_A4705 (153 aa).

Transmembrane regions (helical) follow at residues phenylalanine 8–isoleucine 28, leucine 54–phenylalanine 74, tryptophan 87–leucine 107, and leucine 117–isoleucine 137.

The protein belongs to the UPF0756 family.

Its subcellular location is the cell membrane. The protein is UPF0756 membrane protein BCB4264_A4705 of Bacillus cereus (strain B4264).